The following is a 337-amino-acid chain: P2Y purinoceptor 14 (337 aa).

The Extracellular portion of the chain corresponds to 1–28 (MNATSVPPAEGSCPSNALITKQIIPMLY). Asn2 is a glycosylation site (N-linked (GlcNAc...) asparagine). Residues 29–49 (FVVFVAGILLNGMSGWVFFYV) form a helical membrane-spanning segment. The Cytoplasmic segment spans residues 50–54 (PSSKS). The chain crosses the membrane as a helical span at residues 55 to 75 (FIVYLKNIVIADFLMSLTFPF). Residues 76 to 95 (KILGDLGLGLWQVKVFVCRV) lie on the Extracellular side of the membrane. A disulfide bridge connects residues Cys93 and Cys171. Residues 96 to 116 (SAVLFYINMYVSIVFFGLIGF) traverse the membrane as a helical segment. Topologically, residues 117-138 (DRYYKIVKPLLTSFIQSISYSK) are cytoplasmic. A helical transmembrane segment spans residues 139–159 (LLSVLVWSLTLLIALPNMILT). Residues 160-187 (NRNVTEATRVKCMDLKSDLGLKWHKASS) lie on the Extracellular side of the membrane. Asn162 carries an N-linked (GlcNAc...) asparagine glycan. Residues 188–208 (YIFVGIFWIVFLSLIIFYTAI) traverse the membrane as a helical segment. Topologically, residues 209–233 (TKKIFKSHFKSRKNSVSVKKKSSRN) are cytoplasmic. Residues 234-254 (IFSIMFVFFICFVPYHIARIP) form a helical membrane-spanning segment. The Extracellular portion of the chain corresponds to 255–277 (YTQSQTEAHYSCQSKQILFYVKE). Residues 278–298 (FSLLLSAANVCLDPIIYFFLC) traverse the membrane as a helical segment. The Cytoplasmic segment spans residues 299–337 (QPFREVLCKKLHIQLKTQHDSETSKIKRENIIQESTDTL).

This sequence belongs to the G-protein coupled receptor 1 family.

It localises to the cell membrane. Receptor for UDP-glucose and other UDP-sugar coupled to G-proteins. Not activated by ATP, ADP, UTP or ATP. The sequence is that of P2Y purinoceptor 14 (P2RY14) from Bos taurus (Bovine).